The chain runs to 154 residues: Ribonuclease H (154 aa).

An RNase H type-1 domain is found at 1–142; that stretch reads MEKTVEIYTD…VDDLARDAAG (142 aa). Residues aspartate 10, glutamate 48, aspartate 70, and aspartate 134 each contribute to the Mg(2+) site.

The protein belongs to the RNase H family. Monomer. Requires Mg(2+) as cofactor.

The protein localises to the cytoplasm. The enzyme catalyses Endonucleolytic cleavage to 5'-phosphomonoester.. In terms of biological role, endonuclease that specifically degrades the RNA of RNA-DNA hybrids. This chain is Ribonuclease H, found in Pseudoalteromonas translucida (strain TAC 125).